The sequence spans 339 residues: Alpha-N-dichloroacetyl-p-aminophenylserinol N-oxygenase (339 aa).

The span at 1–19 (MRDHTDEKSEAAGNDDGHV) shows a compositional bias: basic and acidic residues. The interval 1 to 22 (MRDHTDEKSEAAGNDDGHVRIG) is disordered. Positions 109, 144, 147, 205, 232, 236, and 239 each coordinate Fe cation.

Belongs to the AurF N-oxygenase family. The cofactor is Fe(2+).

It catalyses the reaction alpha-N-dichloroacetyl-p-aminophenylserinol + AH2 + 2 O2 = chloramphenicol + A + 2 H2O. It functions in the pathway antibiotic biosynthesis. Involved in chloramphenicol biosynthesis. Catalyzes the six-electron oxidation of an aryl-amine precursor of chloramphenicol (NH2-CAM) to yield the aryl-nitro group of chloramphenicol (CAM). During catalysis, upon exposure of the diferrous cluster to O(2), ClmI forms an exceptionally long-lived peroxo intermediate (CmlI-peroxo), which reacts with NH2-CAM to form CAM. The chain is Alpha-N-dichloroacetyl-p-aminophenylserinol N-oxygenase from Streptomyces venezuelae (strain ATCC 10712 / CBS 650.69 / DSM 40230 / JCM 4526 / NBRC 13096 / PD 04745).